The following is a 419-amino-acid chain: UDP-N-acetylglucosamine 1-carboxyvinyltransferase (419 aa).

Residue 22-23 (KN) coordinates phosphoenolpyruvate. R93 lines the UDP-N-acetyl-alpha-D-glucosamine pocket. The Proton donor role is filled by C117. Position 117 is a 2-(S-cysteinyl)pyruvic acid O-phosphothioketal (C117). UDP-N-acetyl-alpha-D-glucosamine contacts are provided by D307 and I329.

Belongs to the EPSP synthase family. MurA subfamily.

The protein resides in the cytoplasm. It catalyses the reaction phosphoenolpyruvate + UDP-N-acetyl-alpha-D-glucosamine = UDP-N-acetyl-3-O-(1-carboxyvinyl)-alpha-D-glucosamine + phosphate. It functions in the pathway cell wall biogenesis; peptidoglycan biosynthesis. Its function is as follows. Cell wall formation. Adds enolpyruvyl to UDP-N-acetylglucosamine. The sequence is that of UDP-N-acetylglucosamine 1-carboxyvinyltransferase from Shewanella piezotolerans (strain WP3 / JCM 13877).